The primary structure comprises 505 residues: Peroxisome proliferator-activated receptor gamma (505 aa).

Threonine 84 is a glycosylation site (O-linked (GlcNAc) threonine). The residue at position 112 (serine 112) is a Phosphoserine. Positions 136–210 form a DNA-binding region, nuclear receptor; it reads AIECRVCGDK…VGMSHNAIRF (75 aa). 2 NR C4-type zinc fingers span residues 139–159 and 176–198; these read CRVC…CEGC and CDLN…FQKC. The interaction with FAM120B stretch occupies residues 205–280; the sequence is HNAIRFGRMP…DKSPFVIYDM (76 aa). Residues 238 to 503 form the NR LBD domain; that stretch reads DLRALAKHLY…HPLLQEIYKD (266 aa). Residue lysine 252 forms a Glycyl lysine isopeptide (Lys-Gly) (interchain with G-Cter in ubiquitin) linkage. Rosiglitazone-binding positions include 314–317, histidine 351, histidine 477, and tyrosine 501; that span reads QFRS. Residues 495–503 carry the 9aaTAD motif; the sequence is PLLQEIYKD.

The protein belongs to the nuclear hormone receptor family. NR1 subfamily. In terms of assembly, interacts with FOXO1 (acetylated form). Heterodimer with other nuclear receptors, such as RXRA. The heterodimer with the retinoic acid receptor RXRA is called adipocyte-specific transcription factor ARF6. Interacts with NCOA6 coactivator, leading to a strong increase in transcription of target genes. Interacts with coactivator PPARBP, leading to a mild increase in transcription of target genes. Interacts with NOCA7 in a ligand-inducible manner. Interacts with NCOA1 and NCOA2 LXXLL motifs. Interacts with ASXL1, ASXL2, DNTTIP2, FAM120B, MAP2K1/MEK1, NR0B2, PDPK1, PRDM16, PRMT2 and TGFB1I1. Interacts (when activated by agonist) with PPP5C. Interacts with HELZ2 and THRAP3; the interaction stimulates the transcriptional activity of PPARG. Interacts with PER2, the interaction is ligand dependent and blocks PPARG recruitment to target promoters. Interacts with NOCT. Interacts with ACTN4. Interacts (when in the liganded conformation) with GPS2. Interacts with CRY1 and CRY2 in a ligand-dependent manner. In the absence of hormonal ligand, interacts with TACC1. In macrophages, interacts with PAQR3 and STUB1; the interactions promote PPARG poylubiquitination and STUB1-mediated degradation. In terms of processing, O-GlcNAcylation at Thr-84 reduces transcriptional activity in adipocytes. Post-translationally, phosphorylated in basal conditions and dephosphorylated when treated with the ligand. May be dephosphorylated by PPP5C. The phosphorylated form may be inactive and dephosphorylation at Ser-112 induces adipogenic activity. Ubiquitinated by E3 ubiquitin-protein ligase complex containing FBXO9; leading to proteasomal degradation. Ubiquitinated at Lys-252 by TRIM55 leading to proteasomal degradation. Ubiquitinated by E3 ubiquitin-protein ligase STUB1/CHIP; leading to proteasomal degradation. Highest expression in adipose tissue. Lower in skeletal muscle, spleen, heart and liver. Also detectable in placenta, lung and ovary.

It localises to the nucleus. Its subcellular location is the cytoplasm. With respect to regulation, PDPK1 activates its transcriptional activity independently of its kinase activity. Its function is as follows. Nuclear receptor that binds peroxisome proliferators such as hypolipidemic drugs and fatty acids. Once activated by a ligand, the nuclear receptor binds to DNA specific PPAR response elements (PPRE) and modulates the transcription of its target genes, such as acyl-CoA oxidase. It therefore controls the peroxisomal beta-oxidation pathway of fatty acids. Key regulator of adipocyte differentiation and glucose homeostasis. ARF6 acts as a key regulator of the tissue-specific adipocyte P2 (aP2) enhancer. Acts as a critical regulator of gut homeostasis by suppressing NF-kappa-B-mediated pro-inflammatory responses. Plays a role in the regulation of cardiovascular circadian rhythms by regulating the transcription of BMAL1 in the blood vessels. Functionally, (Microbial infection) Upon treatment with M.tuberculosis or its lipoprotein LpqH, phosphorylation of MAPK p38 and IL-6 production are modulated, probably via this protein. The sequence is that of Peroxisome proliferator-activated receptor gamma (PPARG) from Homo sapiens (Human).